Here is a 284-residue protein sequence, read N- to C-terminus: Interferon antagonist OPG040 (284 aa).

6 ANK repeats span residues 29 to 58 (HGHS…LKNL), 60 to 89 (ENEF…DDSQ), 93 to 122 (KGNT…RLMF), 127 to 157 (GWKT…TFDL), 159 to 188 (ILLS…STNT), and 193 to 222 (LFIP…NIYS).

It belongs to the orthopoxvirus OPG039 family.

The protein resides in the host cytoplasm. Its subcellular location is the host nucleus. Its function is as follows. Inhibits antiviral activity induced by type I interferons. Does not block signal transduction of IFN, but is important to counter the host antiviral state induced by a pre-treatment with IFN. Plays a role in the inhibition of host NF-kappa-B activation by preventing the acetylation of the RELA/p65 subunit of NF-kappaB. In Bos taurus (Bovine), this protein is Interferon antagonist OPG040 (OPG039).